A 386-amino-acid chain; its full sequence is Acetate kinase (386 aa).

Asn-7 lines the Mg(2+) pocket. Lys-14 serves as a coordination point for ATP. Substrate is bound at residue Arg-78. The active-site Proton donor/acceptor is Asp-135. Residues 195 to 199 (HLGNG), 268 to 270 (DMR), and 316 to 320 (GIGEN) contribute to the ATP site. Residue Glu-370 participates in Mg(2+) binding.

Belongs to the acetokinase family. As to quaternary structure, homodimer. Requires Mg(2+) as cofactor. Mn(2+) serves as cofactor.

It is found in the cytoplasm. It carries out the reaction acetate + ATP = acetyl phosphate + ADP. It functions in the pathway metabolic intermediate biosynthesis; acetyl-CoA biosynthesis; acetyl-CoA from acetate: step 1/2. Catalyzes the formation of acetyl phosphate from acetate and ATP. Can also catalyze the reverse reaction. The polypeptide is Acetate kinase (Pseudarthrobacter chlorophenolicus (strain ATCC 700700 / DSM 12829 / CIP 107037 / JCM 12360 / KCTC 9906 / NCIMB 13794 / A6) (Arthrobacter chlorophenolicus)).